Consider the following 165-residue polypeptide: Protein SprT (165 aa).

The 144-residue stretch at 20–163 (EKLAQANLKL…RCVHCGEQLV (144 aa)) folds into the SprT-like domain. Histidine 78 contributes to the Zn(2+) binding site. Glutamate 79 is an active-site residue. Histidine 82 contributes to the Zn(2+) binding site.

This sequence belongs to the SprT family. The cofactor is Zn(2+).

It localises to the cytoplasm. The protein is Protein SprT of Escherichia coli (strain K12 / MC4100 / BW2952).